A 352-amino-acid chain; its full sequence is tRNA (guanine-N(1)-)-methyltransferase (352 aa).

S-adenosyl-L-methionine is bound by residues G109 and 129–134 (IGDYVL).

This sequence belongs to the RNA methyltransferase TrmD family. In terms of assembly, homodimer.

The protein localises to the cytoplasm. The enzyme catalyses guanosine(37) in tRNA + S-adenosyl-L-methionine = N(1)-methylguanosine(37) in tRNA + S-adenosyl-L-homocysteine + H(+). Its function is as follows. Specifically methylates guanosine-37 in various tRNAs. This chain is tRNA (guanine-N(1)-)-methyltransferase, found in Chlamydia trachomatis serovar A (strain ATCC VR-571B / DSM 19440 / HAR-13).